Consider the following 350-residue polypeptide: Ceramide synthase 1 (350 aa).

Position 2 is an N-acetylalanine (Ala2). 6 consecutive transmembrane segments (helical) span residues 53-73 (AHLA…WTAL), 103-123 (AWKF…LFGT), 148-168 (IAAA…ATLY), 176-196 (SVVM…SYAF), 239-259 (AADL…LYWF), and 287-307 (LLLL…AFAA). One can recognise a TLC domain in the interval 97–311 (AKMPESAWKF…IVAFAAKVLT (215 aa)).

Acetylated. Deacetylation by SIRT3 increases enzyme activity and promotes mitochondrial ceramide accumulation.

The protein resides in the endoplasmic reticulum membrane. The enzyme catalyses a sphingoid base + octadecanoyl-CoA = an N-octadecanoyl-sphingoid base + CoA + H(+). It catalyses the reaction sphinganine + octadecanoyl-CoA = N-(octadecanoyl)-sphinganine + CoA + H(+). The catalysed reaction is hexadecasphinganine + octadecanoyl-CoA = N-octadecanoylhexadecasphinganine + CoA + H(+). It carries out the reaction sphing-4-enine + octadecanoyl-CoA = N-octadecanoylsphing-4-enine + CoA + H(+). The enzyme catalyses heptadecasphing-4-enine + octadecanoyl-CoA = N-octadecanoyl-heptadecasphing-4-enine + CoA + H(+). It catalyses the reaction 2-hydroxyoctadecanoyl-CoA + sphinganine = N-(2-hydroxyoctadecanoyl)-sphinganine + CoA + H(+). The catalysed reaction is eicosanoyl-CoA + sphinganine = N-eicosanoylsphinganine + CoA + H(+). It participates in lipid metabolism; sphingolipid metabolism. With respect to regulation, inhibited by fumonisin B1. Functionally, ceramide synthase that catalyzes the transfer of the acyl chain from acyl-CoA to a sphingoid base, with high selectivity toward stearoyl-CoA (octadecanoyl-CoA; C18:0-CoA). N-acylates sphinganine and sphingosine bases to form dihydroceramides and ceramides in de novo synthesis and salvage pathways, respectively. Plays a predominant role in skeletal muscle in regulating C18 ceramide and dihydroceramide levels with an impact on whole-body glucose metabolism and insulin sensitivity. Protects from diet-induced obesity by suppressing the uptake of glucose in multiple organs in a FGF21-dependent way. Generates C18 ceramides in the brain, playing a critical role in cerebellar development and Purkinje cell function. In response to cellular stress mediates mitophagy, a known defense mechanism against cell transformation and aging. Upon mitochondria fission, generates C18 ceramides that anchor lipidated MAP1LC3B/LC3B-II autophagolysosomes to outer mitochondrial membranes to eliminate damaged mitochondria. This is Ceramide synthase 1 from Homo sapiens (Human).